The chain runs to 86 residues: Exopolysaccharide production repressor protein (86 aa).

The helical transmembrane segment at 18 to 38 (FAVTLAASVFLQVVYFLSLLF) threads the bilayer. The interval 44-86 (TRESDRSIHSGTRQADQPQKRDRDKTEQSNVPKLDPRRKRRTP) is disordered. Residues 61–70 (PQKRDRDKTE) are compositionally biased toward basic and acidic residues.

It is found in the cell membrane. Its pathway is glycan metabolism; exopolysaccharide biosynthesis. Functionally, inhibition of exopolysaccharide synthesis (EPS) and nodulation ability (NOD). This is Exopolysaccharide production repressor protein (exoX) from Rhizobium leguminosarum bv. phaseoli.